Consider the following 412-residue polypeptide: Gamma-glutamyl phosphate reductase (412 aa).

This sequence belongs to the gamma-glutamyl phosphate reductase family.

It is found in the cytoplasm. The catalysed reaction is L-glutamate 5-semialdehyde + phosphate + NADP(+) = L-glutamyl 5-phosphate + NADPH + H(+). It functions in the pathway amino-acid biosynthesis; L-proline biosynthesis; L-glutamate 5-semialdehyde from L-glutamate: step 2/2. Catalyzes the NADPH-dependent reduction of L-glutamate 5-phosphate into L-glutamate 5-semialdehyde and phosphate. The product spontaneously undergoes cyclization to form 1-pyrroline-5-carboxylate. This is Gamma-glutamyl phosphate reductase from Nitratiruptor sp. (strain SB155-2).